Consider the following 376-residue polypeptide: MTQTWPFLHNAQSFIQENWNASGFQKPTPVQEQAAQLIMDGKDVIAESPTGTGKTLAYALPVLERIKPEQKHPQAVILAPSRELVMQIFQVIQDWKAGSELRAASLIGGANVKKQVEKLKKHPHIIVGTPGRVFELIKAKKLKMHEVKTIVLDETDQLVLPEHRETMKQIIKTTLRDRQLLCFSATLKKETEDVLRELAQEPEVLKVQRSKAEAGKVKHQYLICDQRDKVKLLQKLSRLEGMQALVFVRDIGNLSVYAEKLAYHHVELGVLHSEAKKMERAKIIATFEDGEFPLLLATDIAARGLDIENLPYVIHADIPDEDGYVHRSGRTGRAGKEGNVLSLVTKLEESKLKKMAKKLGVELSEAVYAGGKLKTK.

The Helicase ATP-binding domain occupies 35–205 (AQLIMDGKDV…RELAQEPEVL (171 aa)). An ATP-binding site is contributed by 48-55 (SPTGTGKT). The DEAD box motif lies at 153-156 (DETD). Residues 231–374 (KLLQKLSRLE…EAVYAGGKLK (144 aa)) form the Helicase C-terminal domain.

This sequence belongs to the DEAD box helicase family.

It carries out the reaction ATP + H2O = ADP + phosphate + H(+). In terms of biological role, a probable DEAD-box RNA helicase that plays a role in ribosomal 50S subunit assembly. May be a non-specific RNA helicase. This is Probable ATP-dependent RNA helicase YfmL (yfmL) from Bacillus subtilis (strain 168).